A 233-amino-acid polypeptide reads, in one-letter code: Ribose-5-phosphate isomerase A (233 aa).

Substrate-binding positions include 31–34 (SGST), 87–90 (DGAD), and 100–103 (KGGG). Residue E109 is the Proton acceptor of the active site. Substrate is bound at residue K127.

This sequence belongs to the ribose 5-phosphate isomerase family. Homodimer.

It carries out the reaction aldehydo-D-ribose 5-phosphate = D-ribulose 5-phosphate. The protein operates within carbohydrate degradation; pentose phosphate pathway; D-ribose 5-phosphate from D-ribulose 5-phosphate (non-oxidative stage): step 1/1. In terms of biological role, catalyzes the reversible conversion of ribose-5-phosphate to ribulose 5-phosphate. The chain is Ribose-5-phosphate isomerase A from Chlamydia felis (strain Fe/C-56) (Chlamydophila felis).